A 192-amino-acid chain; its full sequence is Large ribosomal subunit protein uL24c (192 aa).

The N-terminal 47 residues, 1 to 47 (MAAMAALQSSFTSLSLSSNSFLGQRLFPSPTTLQVKTEGHSPCLIVM), are a transit peptide targeting the chloroplast.

As to quaternary structure, component of the chloroplast large ribosomal subunit (LSU). Mature 70S chloroplast ribosomes of higher plants consist of a small (30S) and a large (50S) subunit. The 30S small subunit contains 1 molecule of ribosomal RNA (16S rRNA) and 24 different proteins. The 50S large subunit contains 3 rRNA molecules (23S, 5S and 4.5S rRNA) and 33 different proteins.

It is found in the plastid. Its subcellular location is the chloroplast. Functionally, component of the chloroplast ribosome (chloro-ribosome), a dedicated translation machinery responsible for the synthesis of chloroplast genome-encoded proteins, including proteins of the transcription and translation machinery and components of the photosynthetic apparatus. In Spinacia oleracea (Spinach), this protein is Large ribosomal subunit protein uL24c (RPL24).